The chain runs to 163 residues: NADH-quinone oxidoreductase subunit I (163 aa).

4Fe-4S ferredoxin-type domains follow at residues 54–84 (LRRY…IDSA) and 94–123 (TRYD…ETHI). [4Fe-4S] cluster is bound by residues Cys64, Cys67, Cys70, Cys74, Cys103, Cys106, Cys109, and Cys113.

The protein belongs to the complex I 23 kDa subunit family. As to quaternary structure, NDH-1 is composed of 14 different subunits. Subunits NuoA, H, J, K, L, M, N constitute the membrane sector of the complex. It depends on [4Fe-4S] cluster as a cofactor.

The protein resides in the cell inner membrane. The enzyme catalyses a quinone + NADH + 5 H(+)(in) = a quinol + NAD(+) + 4 H(+)(out). NDH-1 shuttles electrons from NADH, via FMN and iron-sulfur (Fe-S) centers, to quinones in the respiratory chain. The immediate electron acceptor for the enzyme in this species is believed to be ubiquinone. Couples the redox reaction to proton translocation (for every two electrons transferred, four hydrogen ions are translocated across the cytoplasmic membrane), and thus conserves the redox energy in a proton gradient. The sequence is that of NADH-quinone oxidoreductase subunit I from Xanthomonas campestris pv. campestris (strain 8004).